The chain runs to 478 residues: Solute carrier family 49 member 4 (478 aa).

The interval 1 to 27 (MGSGWSSEEEERQPLLGPGLGPAPGAA) is disordered. The Cytoplasmic segment spans residues 1–51 (MGSGWSSEEEERQPLLGPGLGPAPGAARRGREATAVLPAAGPNPGRVYGRR). A Di-leucine motif; mediates lysosomal localization motif is present at residues 15–16 (LL). Residues 52-72 (WLVLLLFSLLAFAQGLVWNTW) form a helical membrane-spanning segment. At 73–89 (GPIQNSARQAYGFSGWD) the chain is on the lumenal side. Residues 90–110 (IALLVLWGPIGFLPCFAFMWL) traverse the membrane as a helical segment. The Cytoplasmic segment spans residues 111–117 (LDKRGLR). Residues 118-138 (VTVLLTSFLMVLGTGLRCIPV) traverse the membrane as a helical segment. Topologically, residues 139–152 (SDLALKKRLIHGGQ) are lumenal. Residues 153–173 (ILNGLAGPTVMNAAPFLSTTW) form a helical membrane-spanning segment. Topologically, residues 174–184 (FSADERATATA) are cytoplasmic. Residues 185-205 (IASMLSYLGGACAFLVGPLVV) traverse the membrane as a helical segment. The Lumenal segment spans residues 206 to 229 (PAPNGTAPLLAAESSRAHIKDRIE). An N-linked (GlcNAc...) asparagine glycan is attached at Asn209. Residues 230 to 250 (TVLYAEFGVVCLIFSATLAYF) form a helical membrane-spanning segment. At 251 to 281 (PPRPPLPPSVAAASQRLSYRRSFCRLLSNLR) the chain is on the cytoplasmic side. A helical transmembrane segment spans residues 282 to 302 (FLMIALAYAIPLGVFAGWSGV). The Lumenal portion of the chain corresponds to 303–314 (LDLILTPVHVSQ). Residues 315 to 335 (VDAGWIGFWSIVGGCVVGIAM) traverse the membrane as a helical segment. Residues 336–347 (ARFADFIRGMLK) lie on the Cytoplasmic side of the membrane. A helical membrane pass occupies residues 348–368 (LILLLLFSGATLSSTWFTLTC). The Lumenal portion of the chain corresponds to 369 to 384 (LNSITHLPLTTVTLYA). Residues 385–405 (SCILLGVFLNSSVPIFFELFV) form a helical membrane-spanning segment. The Cytoplasmic segment spans residues 406–414 (ETVYPVPEG). Residues 415–435 (ITCGVVTFLSNMFMGVLLFFV) traverse the membrane as a helical segment. Over 436–442 (TFYHTEL) the chain is Lumenal. Residues 443–463 (SWFNWCLPGSCLLSLLLILCF) traverse the membrane as a helical segment. Residues 464 to 478 (RESYDRLYLDVVVSV) lie on the Cytoplasmic side of the membrane.

This sequence belongs to the major facilitator superfamily. Cleaved in lysosomes by cathepsin L between Leu-214 and Ala-261, generating a N-glycosylated N-terminal and a non-glycosylated C-terminal fragment.

It localises to the lysosome membrane. The enzyme catalyses pyridoxine(out) + n H(+)(out) = pyridoxine(in) + n H(+)(in). Its function is as follows. Mediates H(+)-dependent pyridoxine transport. This is Solute carrier family 49 member 4 (Slc49a4) from Mus musculus (Mouse).